The chain runs to 84 residues: Phosphoribosylformylglycinamidine synthase subunit PurS (84 aa).

Belongs to the PurS family. Homodimer or homotetramer. Part of the FGAM synthase complex composed of 1 PurL, 1 PurQ and 2 PurS subunits.

It is found in the cytoplasm. It carries out the reaction N(2)-formyl-N(1)-(5-phospho-beta-D-ribosyl)glycinamide + L-glutamine + ATP + H2O = 2-formamido-N(1)-(5-O-phospho-beta-D-ribosyl)acetamidine + L-glutamate + ADP + phosphate + H(+). Its pathway is purine metabolism; IMP biosynthesis via de novo pathway; 5-amino-1-(5-phospho-D-ribosyl)imidazole from N(2)-formyl-N(1)-(5-phospho-D-ribosyl)glycinamide: step 1/2. In terms of biological role, part of the phosphoribosylformylglycinamidine synthase complex involved in the purines biosynthetic pathway. Catalyzes the ATP-dependent conversion of formylglycinamide ribonucleotide (FGAR) and glutamine to yield formylglycinamidine ribonucleotide (FGAM) and glutamate. The FGAM synthase complex is composed of three subunits. PurQ produces an ammonia molecule by converting glutamine to glutamate. PurL transfers the ammonia molecule to FGAR to form FGAM in an ATP-dependent manner. PurS interacts with PurQ and PurL and is thought to assist in the transfer of the ammonia molecule from PurQ to PurL. This Bacillus subtilis (strain 168) protein is Phosphoribosylformylglycinamidine synthase subunit PurS.